A 414-amino-acid chain; its full sequence is Riboflavin biosynthesis protein RibBA (414 aa).

The tract at residues 1-204 (MTRFDTIERA…IADMIAWRRK (204 aa)) is DHBP synthase. Residues 28–29 (RE), D33, 141–145 (RPGHT), and E165 each bind D-ribulose 5-phosphate. E29 is a Mg(2+) binding site. H144 lines the Mg(2+) pocket. Positions 205–414 (HEKQVVRVAE…DDLDLGETAQ (210 aa)) are GTP cyclohydrolase II. 255-259 (RVHSE) provides a ligand contact to GTP. The Zn(2+) site is built by C260, C271, and C273. Residues Q276, 299 to 301 (EGR), and T321 contribute to the GTP site. D333 (proton acceptor; for GTP cyclohydrolase activity) is an active-site residue. The active-site Nucleophile; for GTP cyclohydrolase activity is the R335. The GTP site is built by T356 and K361.

It in the N-terminal section; belongs to the DHBP synthase family. In the C-terminal section; belongs to the GTP cyclohydrolase II family. It depends on Mg(2+) as a cofactor. Requires Mn(2+) as cofactor. The cofactor is Zn(2+).

The catalysed reaction is D-ribulose 5-phosphate = (2S)-2-hydroxy-3-oxobutyl phosphate + formate + H(+). It carries out the reaction GTP + 4 H2O = 2,5-diamino-6-hydroxy-4-(5-phosphoribosylamino)-pyrimidine + formate + 2 phosphate + 3 H(+). The protein operates within cofactor biosynthesis; riboflavin biosynthesis; 2-hydroxy-3-oxobutyl phosphate from D-ribulose 5-phosphate: step 1/1. Its pathway is cofactor biosynthesis; riboflavin biosynthesis; 5-amino-6-(D-ribitylamino)uracil from GTP: step 1/4. In terms of biological role, catalyzes the conversion of D-ribulose 5-phosphate to formate and 3,4-dihydroxy-2-butanone 4-phosphate. Functionally, catalyzes the conversion of GTP to 2,5-diamino-6-ribosylamino-4(3H)-pyrimidinone 5'-phosphate (DARP), formate and pyrophosphate. This is Riboflavin biosynthesis protein RibBA from Nocardia farcinica (strain IFM 10152).